Here is a 183-residue protein sequence, read N- to C-terminus: Large ribosomal subunit protein uL5 (183 aa).

The protein belongs to the universal ribosomal protein uL5 family. As to quaternary structure, part of the 50S ribosomal subunit; part of the 5S rRNA/L5/L18/L25 subcomplex. Contacts the 5S rRNA and the P site tRNA. Forms a bridge to the 30S subunit in the 70S ribosome.

Functionally, this is one of the proteins that bind and probably mediate the attachment of the 5S RNA into the large ribosomal subunit, where it forms part of the central protuberance. In the 70S ribosome it contacts protein S13 of the 30S subunit (bridge B1b), connecting the 2 subunits; this bridge is implicated in subunit movement. Contacts the P site tRNA; the 5S rRNA and some of its associated proteins might help stabilize positioning of ribosome-bound tRNAs. This Kosmotoga olearia (strain ATCC BAA-1733 / DSM 21960 / TBF 19.5.1) protein is Large ribosomal subunit protein uL5.